Here is a 130-residue protein sequence, read N- to C-terminus: ATP synthase epsilon chain (130 aa).

The protein belongs to the ATPase epsilon chain family. As to quaternary structure, F-type ATPases have 2 components, CF(1) - the catalytic core - and CF(0) - the membrane proton channel. CF(1) has five subunits: alpha(3), beta(3), gamma(1), delta(1), epsilon(1). CF(0) has three main subunits: a, b and c.

Its subcellular location is the cell inner membrane. In terms of biological role, produces ATP from ADP in the presence of a proton gradient across the membrane. In Campylobacter hominis (strain ATCC BAA-381 / DSM 21671 / CCUG 45161 / LMG 19568 / NCTC 13146 / CH001A), this protein is ATP synthase epsilon chain.